The chain runs to 426 residues: Dihydroorotase (426 aa).

His-59 and His-61 together coordinate Zn(2+). Residues 61–63 (HLR) and Asn-93 contribute to the substrate site. Zn(2+) is bound by residues Asp-151, His-178, and His-232. Position 279 (Asn-279) interacts with substrate. Residue Asp-306 coordinates Zn(2+). The active site involves Asp-306. Residues His-310 and 324–325 (FG) contribute to the substrate site.

The protein belongs to the metallo-dependent hydrolases superfamily. DHOase family. Class I DHOase subfamily. It depends on Zn(2+) as a cofactor.

The catalysed reaction is (S)-dihydroorotate + H2O = N-carbamoyl-L-aspartate + H(+). Its pathway is pyrimidine metabolism; UMP biosynthesis via de novo pathway; (S)-dihydroorotate from bicarbonate: step 3/3. In terms of biological role, catalyzes the reversible cyclization of carbamoyl aspartate to dihydroorotate. The polypeptide is Dihydroorotase (Brevibacillus brevis (strain 47 / JCM 6285 / NBRC 100599)).